Here is a 288-residue protein sequence, read N- to C-terminus: Proteasome subunit beta (288 aa).

A propeptide spans 1–57 (removed in mature form; by autocatalysis); the sequence is MTAGDPMRLHPGHALSSFTEHLRALAPELLGPNRFAALDGATGSSGGTGAKDIAPHG. The active-site Nucleophile is threonine 58.

It belongs to the peptidase T1B family. In terms of assembly, the 20S proteasome core is composed of 14 alpha and 14 beta subunits that assemble into four stacked heptameric rings, resulting in a barrel-shaped structure. The two inner rings, each composed of seven catalytic beta subunits, are sandwiched by two outer rings, each composed of seven alpha subunits. The catalytic chamber with the active sites is on the inside of the barrel. Has a gated structure, the ends of the cylinder being occluded by the N-termini of the alpha-subunits. Is capped by the proteasome-associated ATPase, ARC.

Its subcellular location is the cytoplasm. It carries out the reaction Cleavage of peptide bonds with very broad specificity.. Its pathway is protein degradation; proteasomal Pup-dependent pathway. The formation of the proteasomal ATPase ARC-20S proteasome complex, likely via the docking of the C-termini of ARC into the intersubunit pockets in the alpha-rings, may trigger opening of the gate for substrate entry. Interconversion between the open-gate and close-gate conformations leads to a dynamic regulation of the 20S proteasome proteolysis activity. Functionally, component of the proteasome core, a large protease complex with broad specificity involved in protein degradation. This chain is Proteasome subunit beta, found in Nocardia farcinica (strain IFM 10152).